We begin with the raw amino-acid sequence, 322 residues long: Acetyl-coenzyme A carboxylase carboxyl transferase subunit alpha (322 aa).

The 264-residue stretch at 30-293 folds into the CoA carboxyltransferase C-terminal domain; that stretch reads ALDISAEIAR…KQTLQESLRK (264 aa).

This sequence belongs to the AccA family. Acetyl-CoA carboxylase is a heterohexamer composed of biotin carboxyl carrier protein (AccB), biotin carboxylase (AccC) and two subunits each of ACCase subunit alpha (AccA) and ACCase subunit beta (AccD).

It is found in the cytoplasm. It carries out the reaction N(6)-carboxybiotinyl-L-lysyl-[protein] + acetyl-CoA = N(6)-biotinyl-L-lysyl-[protein] + malonyl-CoA. Its pathway is lipid metabolism; malonyl-CoA biosynthesis; malonyl-CoA from acetyl-CoA: step 1/1. Functionally, component of the acetyl coenzyme A carboxylase (ACC) complex. First, biotin carboxylase catalyzes the carboxylation of biotin on its carrier protein (BCCP) and then the CO(2) group is transferred by the carboxyltransferase to acetyl-CoA to form malonyl-CoA. The chain is Acetyl-coenzyme A carboxylase carboxyl transferase subunit alpha from Nitrosomonas europaea (strain ATCC 19718 / CIP 103999 / KCTC 2705 / NBRC 14298).